Consider the following 88-residue polypeptide: Beta-insect excitatory toxin LqhIT1a (88 aa).

The signal sequence occupies residues 1–18 (MKFFLLFLVVLPIMGVLG). The 64-residue stretch at 20-83 (KNGYAVDSKG…ISGTTKKYCD (64 aa)) folds into the LCN-type CS-alpha/beta domain. Cystine bridges form between Cys34-Cys55, Cys40-Cys60, Cys44-Cys62, and Cys56-Cys82.

This sequence belongs to the long (4 C-C) scorpion toxin superfamily. Sodium channel inhibitor family. Beta subfamily. As to expression, expressed by the venom gland.

It localises to the secreted. In terms of biological role, excitatory insect toxins induce a spastic paralysis. They bind voltage-independently at site-4 of sodium channels (Nav) and shift the voltage of activation toward more negative potentials thereby affecting sodium channel activation and promoting spontaneous and repetitive firing. In Leiurus hebraeus (Hebrew deathstalker scorpion), this protein is Beta-insect excitatory toxin LqhIT1a.